We begin with the raw amino-acid sequence, 327 residues long: Protoheme IX farnesyltransferase (327 aa).

The next 7 membrane-spanning stretches (helical) occupy residues 55–75 (LVCTLGGGALAAAAAGVLNCL), 101–121 (AAFVGAVSCTLAAAALLVSGV), 124–144 (LAAGLSLLGLCSYVLLYTALL), 152–172 (IVVGGVAGAIPPLVGAAAATG), 180–200 (WLFALVMVWTPAHFWALALLL), 237–257 (FLGIWALPEGGALYGLLILPF), and 278–298 (AKGLFRWSILYLFGVCLLLVM).

It belongs to the UbiA prenyltransferase family. Protoheme IX farnesyltransferase subfamily.

The protein localises to the cell inner membrane. It carries out the reaction heme b + (2E,6E)-farnesyl diphosphate + H2O = Fe(II)-heme o + diphosphate. Its pathway is porphyrin-containing compound metabolism; heme O biosynthesis; heme O from protoheme: step 1/1. In terms of biological role, converts heme B (protoheme IX) to heme O by substitution of the vinyl group on carbon 2 of heme B porphyrin ring with a hydroxyethyl farnesyl side group. This Synechococcus sp. (strain CC9311) protein is Protoheme IX farnesyltransferase.